The following is a 101-amino-acid chain: NADH-quinone oxidoreductase subunit K (101 aa).

3 helical membrane passes run 4–24, 30–50, and 61–81; these read LPHY…GIFV, IVIL…LVAF, and IFAM…LAIL.

The protein belongs to the complex I subunit 4L family. NDH-1 is composed of 14 different subunits. Subunits NuoA, H, J, K, L, M, N constitute the membrane sector of the complex.

The protein localises to the cell inner membrane. It carries out the reaction a quinone + NADH + 5 H(+)(in) = a quinol + NAD(+) + 4 H(+)(out). Functionally, NDH-1 shuttles electrons from NADH, via FMN and iron-sulfur (Fe-S) centers, to quinones in the respiratory chain. The immediate electron acceptor for the enzyme in this species is believed to be ubiquinone. Couples the redox reaction to proton translocation (for every two electrons transferred, four hydrogen ions are translocated across the cytoplasmic membrane), and thus conserves the redox energy in a proton gradient. The polypeptide is NADH-quinone oxidoreductase subunit K (Caulobacter vibrioides (strain ATCC 19089 / CIP 103742 / CB 15) (Caulobacter crescentus)).